A 333-amino-acid chain; its full sequence is Atrochrysone carboxyl ACP thioesterase (333 aa).

Zn(2+) is bound by residues histidine 104, histidine 106, aspartate 108, and histidine 109. Aspartate 108 (proton donor/acceptor) is an active-site residue.

The protein belongs to the metallo-beta-lactamase superfamily. Zn(2+) serves as cofactor.

It catalyses the reaction atrochrysone carboxyl-[ACP] + H2O = atrochrysone carboxylate + holo-[ACP] + H(+). Its pathway is pigment biosynthesis. Atrochrysone carboxyl ACP thioesterase; part of the gene cluster that mediates the biosynthesis of the bianthraquinone cladofulvin, a conidial pigment not required for virulence but that plays a role in fitness and resistance to environmental stresses including UV light and low-temperature stress. The pathway begins with the synthesis of atrochrysone thioester by the polyketide synthase (PKS) claG. The atrochrysone carboxyl ACP thioesterase claF then breaks the thioester bond and releases the atrochrysone carboxylic acid from claG. This compound is decarboxylated by claH to yield emodin, which is further converted to chrysophanol hydroquinone by the reductase claC and the dehydratase claB. The cytochrome P450 monooxygenase claM then catalyzes the dimerization of nataloe-emodin to cladofulvin. This chain is Atrochrysone carboxyl ACP thioesterase, found in Passalora fulva (Tomato leaf mold).